The primary structure comprises 659 residues: Threonine--tRNA ligase (659 aa).

In terms of domain architecture, TGS spans 7–70 (DSELIKLTLP…QQDGAIEIVT (64 aa)). Residues 253 to 555 (DHRKLGSELE…LIENFAGNFP (303 aa)) are catalytic. Positions 351, 402, and 532 each coordinate Zn(2+).

This sequence belongs to the class-II aminoacyl-tRNA synthetase family. As to quaternary structure, homodimer. The cofactor is Zn(2+).

It is found in the cytoplasm. It catalyses the reaction tRNA(Thr) + L-threonine + ATP = L-threonyl-tRNA(Thr) + AMP + diphosphate + H(+). In terms of biological role, catalyzes the attachment of threonine to tRNA(Thr) in a two-step reaction: L-threonine is first activated by ATP to form Thr-AMP and then transferred to the acceptor end of tRNA(Thr). Also edits incorrectly charged L-seryl-tRNA(Thr). This chain is Threonine--tRNA ligase, found in Chloroherpeton thalassium (strain ATCC 35110 / GB-78).